Consider the following 536-residue polypeptide: Serine protease inhibitor 28Dc (536 aa).

Residues M1–C16 form the signal peptide. N-linked (GlcNAc...) asparagine glycosylation is present at N355.

Belongs to the serpin family.

The protein localises to the secreted. Functionally, serine protease inhibitor which is required for pupal viability and plays an essential role in regulating the melanization reaction. Inhibits spontaneous melanization and appears to be involved in the melanization immune response to physical wounding in larvae and adults. Acts by negatively regulating the Hayan-phenoloxidase (PPO1) cascade in the hemolymph and possibly the trachea. May function by controlling the initial release of the activated form of PPO1, phenoloxidase (PO) and thus maintains PO availability for processes such as wound response and pigmentation. The sequence is that of Serine protease inhibitor 28Dc from Drosophila melanogaster (Fruit fly).